Reading from the N-terminus, the 148-residue chain is UPF0260 protein mll2411 (148 aa).

The protein belongs to the UPF0260 family.

The chain is UPF0260 protein mll2411 from Mesorhizobium japonicum (strain LMG 29417 / CECT 9101 / MAFF 303099) (Mesorhizobium loti (strain MAFF 303099)).